Here is an 86-residue protein sequence, read N- to C-terminus: Small ribosomal subunit protein bS20 (86 aa).

Positions Met1–Lys25 are disordered.

The protein belongs to the bacterial ribosomal protein bS20 family.

Its function is as follows. Binds directly to 16S ribosomal RNA. This chain is Small ribosomal subunit protein bS20, found in Nocardia farcinica (strain IFM 10152).